Reading from the N-terminus, the 304-residue chain is Glycine--tRNA ligase alpha subunit (304 aa).

This sequence belongs to the class-II aminoacyl-tRNA synthetase family. Tetramer of two alpha and two beta subunits.

It is found in the cytoplasm. The enzyme catalyses tRNA(Gly) + glycine + ATP = glycyl-tRNA(Gly) + AMP + diphosphate. This chain is Glycine--tRNA ligase alpha subunit, found in Vibrio atlanticus (strain LGP32) (Vibrio splendidus (strain Mel32)).